We begin with the raw amino-acid sequence, 355 residues long: Alanine racemase (355 aa).

K34 functions as the Proton acceptor; specific for D-alanine in the catalytic mechanism. K34 is subject to N6-(pyridoxal phosphate)lysine. R133 lines the substrate pocket. The active-site Proton acceptor; specific for L-alanine is the Y249. M297 is a substrate binding site.

The protein belongs to the alanine racemase family. The cofactor is pyridoxal 5'-phosphate.

It carries out the reaction L-alanine = D-alanine. It functions in the pathway amino-acid biosynthesis; D-alanine biosynthesis; D-alanine from L-alanine: step 1/1. Functionally, catalyzes the interconversion of L-alanine and D-alanine. May also act on other amino acids. In Rickettsia conorii (strain ATCC VR-613 / Malish 7), this protein is Alanine racemase (alr).